Reading from the N-terminus, the 147-residue chain is Large ribosomal subunit protein uL13 (147 aa).

This sequence belongs to the universal ribosomal protein uL13 family. Part of the 50S ribosomal subunit.

This protein is one of the early assembly proteins of the 50S ribosomal subunit, although it is not seen to bind rRNA by itself. It is important during the early stages of 50S assembly. This is Large ribosomal subunit protein uL13 from Kineococcus radiotolerans (strain ATCC BAA-149 / DSM 14245 / SRS30216).